The sequence spans 194 residues: Orotate phosphoribosyltransferase (194 aa).

5-phospho-alpha-D-ribose 1-diphosphate is bound by residues Lys98 and 122 to 130 (EDVLTTGGS). Positions 126 and 154 each coordinate orotate.

It belongs to the purine/pyrimidine phosphoribosyltransferase family. PyrE subfamily. Homodimer. Mg(2+) serves as cofactor.

The catalysed reaction is orotidine 5'-phosphate + diphosphate = orotate + 5-phospho-alpha-D-ribose 1-diphosphate. It participates in pyrimidine metabolism; UMP biosynthesis via de novo pathway; UMP from orotate: step 1/2. Its function is as follows. Catalyzes the transfer of a ribosyl phosphate group from 5-phosphoribose 1-diphosphate to orotate, leading to the formation of orotidine monophosphate (OMP). This is Orotate phosphoribosyltransferase from Deinococcus radiodurans (strain ATCC 13939 / DSM 20539 / JCM 16871 / CCUG 27074 / LMG 4051 / NBRC 15346 / NCIMB 9279 / VKM B-1422 / R1).